A 406-amino-acid chain; its full sequence is Tryptophan synthase beta chain (406 aa).

Position 99 is an N6-(pyridoxal phosphate)lysine (lysine 99).

It belongs to the TrpB family. Tetramer of two alpha and two beta chains. Requires pyridoxal 5'-phosphate as cofactor.

The catalysed reaction is (1S,2R)-1-C-(indol-3-yl)glycerol 3-phosphate + L-serine = D-glyceraldehyde 3-phosphate + L-tryptophan + H2O. The protein operates within amino-acid biosynthesis; L-tryptophan biosynthesis; L-tryptophan from chorismate: step 5/5. The beta subunit is responsible for the synthesis of L-tryptophan from indole and L-serine. The polypeptide is Tryptophan synthase beta chain (trpB) (Agrobacterium fabrum (strain C58 / ATCC 33970) (Agrobacterium tumefaciens (strain C58))).